The following is a 207-amino-acid chain: Large ribosomal subunit protein uL4 (207 aa).

Positions 43–85 (SRRQGTHDTKGRSEVRGGGRKPWKQKGTGRARQGSIRSPQWVG) are disordered. Positions 47–59 (GTHDTKGRSEVRG) are enriched in basic and acidic residues. A compositionally biased stretch (basic residues) spans 60-71 (GGRKPWKQKGTG).

This sequence belongs to the universal ribosomal protein uL4 family. As to quaternary structure, part of the 50S ribosomal subunit.

Its function is as follows. One of the primary rRNA binding proteins, this protein initially binds near the 5'-end of the 23S rRNA. It is important during the early stages of 50S assembly. It makes multiple contacts with different domains of the 23S rRNA in the assembled 50S subunit and ribosome. Functionally, forms part of the polypeptide exit tunnel. The protein is Large ribosomal subunit protein uL4 of Exiguobacterium sibiricum (strain DSM 17290 / CCUG 55495 / CIP 109462 / JCM 13490 / 255-15).